The following is a 364-amino-acid chain: Peptide chain release factor 1 (364 aa).

Residue Gln238 is modified to N5-methylglutamine.

It belongs to the prokaryotic/mitochondrial release factor family. Post-translationally, methylated by PrmC. Methylation increases the termination efficiency of RF1.

It localises to the cytoplasm. Peptide chain release factor 1 directs the termination of translation in response to the peptide chain termination codons UAG and UAA. The polypeptide is Peptide chain release factor 1 (Psychrobacter sp. (strain PRwf-1)).